Consider the following 419-residue polypeptide: L-rhamnose isomerase (419 aa).

Histidine 262, aspartate 294, and aspartate 296 together coordinate Mn(2+).

Belongs to the rhamnose isomerase family. Homotetramer. Mn(2+) serves as cofactor.

It is found in the cytoplasm. The enzyme catalyses L-rhamnopyranose = L-rhamnulose. It functions in the pathway carbohydrate degradation; L-rhamnose degradation; glycerone phosphate from L-rhamnose: step 1/3. Functionally, catalyzes the interconversion of L-rhamnose and L-rhamnulose. This chain is L-rhamnose isomerase, found in Citrobacter koseri (strain ATCC BAA-895 / CDC 4225-83 / SGSC4696).